The following is a 164-amino-acid chain: Putative lung carcinoma-associated protein 10 (164 aa).

The interval 1-164 (MSSCPVHDCP…TQKPQTTVGQ (164 aa)) is disordered. The segment covering 23–40 (GSRGALRLRGGAPGSAAG) has biased composition (low complexity). Residues 152–164 (MQKTQKPQTTVGQ) are compositionally biased toward polar residues.

This is Putative lung carcinoma-associated protein 10 (LCA10) from Homo sapiens (Human).